Reading from the N-terminus, the 184-residue chain is KIVSRWMGSQNNHQQTHPNHHHHLPPLQHHANNYFPMPLSTYYPPDSSVPLPFPSPAGVNSTQAPFNPSQFCFSHRRKRRILFSQAQIYELERRFRQQKYLSAPEREHLATFIGLTPTQVKIWFQNHRYKTKKSKKESKNSPSSSSMTSSSSASNKVASTTHSPKVSSNGGNGSNTTNNNNKPG.

Disordered regions lie at residues 1–29 (KIVSRWMGSQNNHQQTHPNHHHHLPPLQH) and 129–184 (YKTK…NKPG). A DNA-binding region (homeobox) is located at residues 76-135 (RRKRRILFSQAQIYELERRFRQQKYLSAPEREHLATFIGLTPTQVKIWFQNHRYKTKKSK). Low complexity-rich tracts occupy residues 140 to 161 (NSPSSSSMTSSSSASNKVASTT) and 174 to 184 (SNTTNNNNKPG).

This sequence belongs to the NK-2 homeobox family. In terms of tissue distribution, expressed in a segmental pattern in the endoderm and in the cephalic nervous system.

The protein localises to the nucleus. May play a role in patterning the gut. This Helobdella triserialis (Leech) protein is Homeobox protein LOX10 (LOX10).